Reading from the N-terminus, the 156-residue chain is Endoribonuclease YbeY (156 aa).

Zn(2+)-binding residues include His122, His126, and His132.

Belongs to the endoribonuclease YbeY family. Zn(2+) serves as cofactor.

The protein resides in the cytoplasm. In terms of biological role, single strand-specific metallo-endoribonuclease involved in late-stage 70S ribosome quality control and in maturation of the 3' terminus of the 16S rRNA. In Bacillus cytotoxicus (strain DSM 22905 / CIP 110041 / 391-98 / NVH 391-98), this protein is Endoribonuclease YbeY.